A 163-amino-acid chain; its full sequence is Transcriptional repressor NrdR (163 aa).

A zinc finger lies at 3 to 34 (CPFCRHDDSRVVDSRTTDDGSSIRRRRQCPNC). The ATP-cone domain maps to 46–136 (LSVIKRSGAP…VYQAFDSLAD (91 aa)).

This sequence belongs to the NrdR family. Requires Zn(2+) as cofactor.

In terms of biological role, negatively regulates transcription of bacterial ribonucleotide reductase nrd genes and operons by binding to NrdR-boxes. In Kineococcus radiotolerans (strain ATCC BAA-149 / DSM 14245 / SRS30216), this protein is Transcriptional repressor NrdR.